Reading from the N-terminus, the 348-residue chain is MADIYRFPKFSYEDNGTVEPLPLRTGPDKKAIPHIRIVKVGDPPKHGVRYLDLLLLGFFETPKQTTNLGSVSDLTEPTSYSICGSGSLPIGVAKYYGTDQELLKACTDLRITVRRTVRAGEMIVYMVDSIGAPLLPWSGRLRQGMIFNANKVALAPQCLPVDKDIRLRVVFVNGTSLGAITIAKIPKTLADLALPNSISVNLLVTLKTGISTEQKGVLPVLDDQGEKKLNFMVHLGLIRRKVGKIYSVEYCKSKIERMRLIFSLGLIGGISFHVQVNGTLSKTFMSQLAWKRAVCFPLMDVNPHMNMVIWAASVEITGVDAVFQPAIPRDFRYYPNVVAKNIGRIRKL.

The YLDL motif signature appears at 50-53 (YLDL). A Phosphoserine; by host modification is found at S70.

The protein belongs to the morbillivirus/respirovirus/rubulavirus M protein family. Homomultimer. Binds to the cytoplasmic regions of F and HN proteins. Interacts with nucleocapsid. Interacts with human alpha-tubulin and beta-tubulin. Interacts with host ANP32B. Post-translationally, a large portion is phosphorylated in the cytoplasm, but not in virion. However, this phosphorylation is not essential for virus replication.

The protein localises to the virion. It localises to the host cytoplasm. Its subcellular location is the host cell membrane. Plays a crucial role in virion assembly and budding. Forms a shell at the inner face of the plasma membrane and concentrates the HN and F glycoproteins. Acts as a negative regulator for transcription and replication by sticking to the nucleocapsid. This effect might be regulated by the cytoplasmic interaction with tubulin that dissociates the M protein from the nucleocapsid. The sequence is that of Matrix protein (M) from Cavia cutleri (Guinea pig).